A 483-amino-acid chain; its full sequence is tRNA-2-methylthio-N(6)-dimethylallyladenosine synthase (483 aa).

Residues 31-148 (KKLYIETQGC…LPQMLDQHQD (118 aa)) enclose the MTTase N-terminal domain. [4Fe-4S] cluster is bound by residues cysteine 40, cysteine 77, cysteine 111, cysteine 192, cysteine 196, and cysteine 199. The 233-residue stretch at 178–410 (RVEGFKAFVS…QHWIKQSSIR (233 aa)) folds into the Radical SAM core domain. The TRAM domain maps to 413-477 (DAMQGTIQRV…LNLVYGELLN (65 aa)).

This sequence belongs to the methylthiotransferase family. MiaB subfamily. As to quaternary structure, monomer. It depends on [4Fe-4S] cluster as a cofactor.

It localises to the cytoplasm. The enzyme catalyses N(6)-dimethylallyladenosine(37) in tRNA + (sulfur carrier)-SH + AH2 + 2 S-adenosyl-L-methionine = 2-methylsulfanyl-N(6)-dimethylallyladenosine(37) in tRNA + (sulfur carrier)-H + 5'-deoxyadenosine + L-methionine + A + S-adenosyl-L-homocysteine + 2 H(+). Catalyzes the methylthiolation of N6-(dimethylallyl)adenosine (i(6)A), leading to the formation of 2-methylthio-N6-(dimethylallyl)adenosine (ms(2)i(6)A) at position 37 in tRNAs that read codons beginning with uridine. The protein is tRNA-2-methylthio-N(6)-dimethylallyladenosine synthase of Acinetobacter baylyi (strain ATCC 33305 / BD413 / ADP1).